A 565-amino-acid chain; its full sequence is NAD-dependent malic enzyme (565 aa).

Residue tyrosine 104 is the Proton donor of the active site. Position 157 (arginine 157) interacts with NAD(+). Lysine 175 functions as the Proton acceptor in the catalytic mechanism. Residues glutamate 246, aspartate 247, and aspartate 270 each coordinate a divalent metal cation. Positions 270 and 418 each coordinate NAD(+).

This sequence belongs to the malic enzymes family. In terms of assembly, homotetramer. Mg(2+) serves as cofactor. It depends on Mn(2+) as a cofactor.

The enzyme catalyses (S)-malate + NAD(+) = pyruvate + CO2 + NADH. It catalyses the reaction oxaloacetate + H(+) = pyruvate + CO2. The protein is NAD-dependent malic enzyme of Shigella boydii serotype 18 (strain CDC 3083-94 / BS512).